We begin with the raw amino-acid sequence, 251 residues long: Developmental protein SEPALLATA 3 (251 aa).

Residues 3–57 (RGRVELKRIENKINRQVTFAKRRNGLLKKAYELSVLCDAEVALIIFSNRGKLYEF) form the MADS-box domain. The K-box domain occupies 91 to 181 (ELSSQQEYLK…RLRLADGYQM (91 aa)). Residues 94-177 (SQQEYLKLKE…NKTLRLRLAD (84 aa)) adopt a coiled-coil conformation.

As to quaternary structure, forms homodimers. Heterodimer with AP1 or AG capable of binding to CArG-box sequences. Binds AP3/PI to form a ternary complex. Interacts with AGL16. Interacts with TT16/AGL32.

It localises to the nucleus. Functionally, probable transcription factor active in inflorescence development and floral organogenesis. Functions with SEPALLATA1/AGL2 and SEPALLATA2/AGL4 to ensure proper development of petals, stamens and carpels and to prevent the indeterminate growth of the flower meristem. Interacts with APETALA1, AGAMOUS or APETALA3/PISTILLATA to form complexes, that could be involved in genes regulation during floral meristem development. Binds specifically to the CArG box DNA sequence 5'-CC (A/T)6 GG-3'. In Arabidopsis thaliana (Mouse-ear cress), this protein is Developmental protein SEPALLATA 3 (SEP3).